We begin with the raw amino-acid sequence, 294 residues long: Cytidine deaminase (294 aa).

2 CMP/dCMP-type deaminase domains span residues 48–168 (DEDA…FGPK) and 186–294 (LTGD…VLLG). Position 89–91 (89–91 (NME)) interacts with substrate. His-102 provides a ligand contact to Zn(2+). Catalysis depends on Glu-104, which acts as the Proton donor. The Zn(2+) site is built by Cys-129 and Cys-132.

This sequence belongs to the cytidine and deoxycytidylate deaminase family. In terms of assembly, homodimer. Zn(2+) is required as a cofactor.

The catalysed reaction is cytidine + H2O + H(+) = uridine + NH4(+). It carries out the reaction 2'-deoxycytidine + H2O + H(+) = 2'-deoxyuridine + NH4(+). Its function is as follows. This enzyme scavenges exogenous and endogenous cytidine and 2'-deoxycytidine for UMP synthesis. The polypeptide is Cytidine deaminase (Salmonella dublin (strain CT_02021853)).